Here is a 307-residue protein sequence, read N- to C-terminus: Nuclear polyadenylated RNA-binding protein nab2 (307 aa).

Positions 102-135 (STDKSQQSFSVPETSIQPQSSQTPNITSLREEKE) are disordered. The segment covering 105–129 (KSQQSFSVPETSIQPQSSQTPNITS) has biased composition (polar residues). 3 consecutive C3H1-type zinc fingers follow at residues 178–202 (TQEVPLCKYADKCSRANCIFAHPTP), 217–232 (CASGKECKAADCVKGH), and 254–268 (CKYKPCLNPACRFIH). Residues 274-307 (NMTWRPPSKTEETSLSERSFAVNESEEQLHVPSV) are disordered.

This sequence belongs to the ZC3H14 family.

Its subcellular location is the nucleus. Its function is as follows. RNA-binding protein involved in RNA processing. Acts as a regulator of mRNA stability: binds to mRNAs and pre-mRNAs, preventing their degradation. Involved in the biogenesis of circular RNAs (circRNAs) which are produced by back-splicing circularization of pre-mRNAs. This Schizosaccharomyces pombe (strain 972 / ATCC 24843) (Fission yeast) protein is Nuclear polyadenylated RNA-binding protein nab2.